A 419-amino-acid chain; its full sequence is Probable glycosidase C21B10.07 (419 aa).

2 disordered regions span residues 1–20 (MGIP…AALS) and 29–67 (DPAR…NNEN). Positions 30–59 (PARKNESTNDVIDNHTDTEIDDHDNDHENL) are enriched in basic and acidic residues. Residues 88–108 (FIWILIFIVALICSVLIGVLG) form a helical membrane-spanning segment. One can recognise a GH16 domain in the interval 122–387 (PSYKAKTYSL…WAGSSVYSSA (266 aa)). Glu237 functions as the Nucleophile in the catalytic mechanism. Glu242 functions as the Proton donor in the catalytic mechanism.

Belongs to the glycosyl hydrolase 16 family.

It is found in the membrane. In Schizosaccharomyces pombe (strain 972 / ATCC 24843) (Fission yeast), this protein is Probable glycosidase C21B10.07.